Here is a 172-residue protein sequence, read N- to C-terminus: Co-chaperone protein HscB homolog (172 aa).

In terms of domain architecture, J spans 2–69 (NHFELFNLPV…DSRAAYLLAL (68 aa)).

This sequence belongs to the HscB family. As to quaternary structure, interacts with HscA and stimulates its ATPase activity.

Its function is as follows. Co-chaperone involved in the maturation of iron-sulfur cluster-containing proteins. Seems to help targeting proteins to be folded toward HscA. The sequence is that of Co-chaperone protein HscB homolog from Acinetobacter baumannii (strain AB307-0294).